Reading from the N-terminus, the 183-residue chain is ADP-ribosylation factor-like protein 5 (183 aa).

Residues 27–34 (GLNAAGKT), 70–74 (DLGGQ), and 129–132 (NKQD) contribute to the GTP site.

This sequence belongs to the small GTPase superfamily. Arf family.

Its function is as follows. May bind and exchange GTP and GDP. The polypeptide is ADP-ribosylation factor-like protein 5 (arl5) (Dictyostelium discoideum (Social amoeba)).